The sequence spans 449 residues: Heterogeneous nuclear ribonucleoprotein H2 (449 aa).

At Met1 the chain carries N-acetylmethionine. Met2 bears the N-acetylmethionine; in Heterogeneous nuclear ribonucleoprotein H2, N-terminally processed mark. The 80-residue stretch at 11–90 folds into the RRM 1 domain; the sequence is FVVKVRGLPW…RYVEVFKSNS (80 aa). Position 23 is a phosphoserine (Ser23). Residue Lys35 forms a Glycyl lysine isopeptide (Lys-Gly) (interchain with G-Cter in SUMO2) linkage. Phosphoserine occurs at positions 54 and 63. A Glycyl lysine isopeptide (Lys-Gly) (interchain with G-Cter in SUMO2) cross-link involves residue Lys87. Position 90 is a phosphoserine (Ser90). Lys98 is covalently cross-linked (Glycyl lysine isopeptide (Lys-Gly) (interchain with G-Cter in SUMO2)). An RRM 2 domain is found at 111–188; the sequence is GFVRLRGLPF…RYIEIFKSSR (78 aa). Arg233 carries the dimethylated arginine; alternate modification. Omega-N-methylarginine; alternate is present on Arg233. The 1-1 repeat unit spans residues 234 to 249; the sequence is GAYGGGYGGYDDYGGY. The tract at residues 234 to 433 is 2 X 16 AA Gly-rich approximate repeats; the sequence is GAYGGGYGGY…YGGQSSMSGY (200 aa). Tyr246 is subject to Phosphotyrosine. The RRM 3 domain maps to 289 to 364; it reads HCVHMRGLPY…RYVELFLNST (76 aa). Ser310 is modified (phosphoserine). Repeat copies occupy residues 354-372, 374-392, and 418-433. A 2 X 19 AA perfect repeats region spans residues 354 to 392; that stretch reads HRYVELFLNSTAGTSGGAYDHSYVELFLNSTAGASGGAY.

Component of a ribonucleoprotein complex containing mRNAs and RNA-binding proteins including DDX5, HNRNPH2 and SRSF1 as well as splicing regulator ARVCF. Interacts with TXNL4/DIM1.

The protein localises to the nucleus. It is found in the nucleoplasm. In terms of biological role, this protein is a component of the heterogeneous nuclear ribonucleoprotein (hnRNP) complexes which provide the substrate for the processing events that pre-mRNAs undergo before becoming functional, translatable mRNAs in the cytoplasm. Binds poly(RG). The chain is Heterogeneous nuclear ribonucleoprotein H2 (HNRNPH2) from Bos taurus (Bovine).